The primary structure comprises 395 residues: Thyrotropin-releasing hormone receptor (395 aa).

Over 1 to 30 (MENGTGDEQNHTGLLLSSQEFVTAEYQVVT) the chain is Extracellular. 2 N-linked (GlcNAc...) asparagine glycosylation sites follow: Asn-3 and Asn-10. Residues 31–53 (ILLVLLICGLGIVGNIMVVLVVL) traverse the membrane as a helical segment. Over 54–63 (RTKHMRTPTN) the chain is Cytoplasmic. A helical membrane pass occupies residues 64–85 (CYLVSLAVADLMVLVAAGLPNI). The Extracellular portion of the chain corresponds to 86 to 101 (TESLYKSWVYGYVGCL). Cys-100 and Cys-181 are oxidised to a cystine. A helical transmembrane segment spans residues 102-123 (CITYLQYLGINASSFSITAFTI). Topologically, residues 124 to 146 (ERYIAICHPIKAQFLCTFSRAKK) are cytoplasmic. A helical membrane pass occupies residues 147-170 (IIIFVWSFASVYCMLWFFLLDLNI). Over 171–195 (AVYKDTTVVSCGYKVSRSYYSPIYM) the chain is Extracellular. A helical membrane pass occupies residues 196-217 (MDFGIFYVLPMVLATVLYGLIA). Residues 218-268 (RILFLNPIPSDPKENSNTWKNDMAQQNKTVNSKMTNKSFNSTIASRRQVTK) are Cytoplasmic-facing. A helical membrane pass occupies residues 269–290 (MLAVVVVLFAFLWMPYRTLVVV). The Extracellular segment spans residues 291 to 298 (NSFLSSPF). Residues 299 to 321 (QENWFLLFCRICIYLNSAINPVI) traverse the membrane as a helical segment. Residues 322-395 (YNLMSQKFRA…IGDTCLSSEA (74 aa)) are Cytoplasmic-facing.

This sequence belongs to the G-protein coupled receptor 1 family.

It localises to the cell membrane. Receptor for thyrotropin-releasing hormone (TRH). Upon ligand binding, this G-protein-coupled receptor triggers activation of the phosphatidylinositol (IP3)-calcium-protein kinase C (PKC) pathway. This chain is Thyrotropin-releasing hormone receptor (TRHR), found in Gallus gallus (Chicken).